A 13477-amino-acid polypeptide reads, in one-letter code: Mucin-3B (13477 aa).

An N-terminal signal peptide occupies residues 1-21; that stretch reads MQLLGLLSILWMLKSSPGATG. Positions 219–234 are enriched in low complexity; it reads TISSTTRTTERTPLPT. Disordered regions lie at residues 219 to 243, 327 to 347, 360 to 383, 513 to 559, 622 to 643, 815 to 839, 923 to 968, 1154 to 1179, 1480 to 1511, 1529 to 1601, 1619 to 1638, 1692 to 1714, 1944 to 1968, 2064 to 2123, 2170 to 2197, 2275 to 2308, 2442 to 2462, 2476 to 2497, 2509 to 2537, 2591 to 2610, 2672 to 2717, 2812 to 2832, 2845 to 2867, 2922 to 2947, 3074 to 3109, 3309 to 3395, 3420 to 3481, 3545 to 3565, 3654 to 3727, 3740 to 3812, 4014 to 4047, 4067 to 4106, 4182 to 4249, 4269 to 4313, 4510 to 4530, 4557 to 4617, 4630 to 4651, 4802 to 4830, 4953 to 4986, 5128 to 5203, 5455 to 5486, 5627 to 5680, 5834 to 5908, 5957 to 5977, 5990 to 6017, 6030 to 6080, 6120 to 6150, 6172 to 6197, 6456 to 6481, 6541 to 6598, 6846 to 6867, 6946 to 6971, 6999 to 7021, 7067 to 7093, 7170 to 7206, 7225 to 7244, 7299 to 7329, 7400 to 7433, 7476 to 7532, 7578 to 7600, 7731 to 7766, 7922 to 7996, 8036 to 8066, 8088 to 8113, 8372 to 8397, 8457 to 8514, 8762 to 8783, 8862 to 8887, 8915 to 8941, 8983 to 9009, 9052 to 9122, 9141 to 9160, 9215 to 9240, 9335 to 9366, 9409 to 9465, 9566 to 9589, 9612 to 9674, 9734 to 9760, 9828 to 9859, 9883 to 9908, 9921 to 9973, 10076 to 10099, 10120 to 10166, 10189 to 10285, 10389 to 10425, 10462 to 10481, 10501 to 10537, 10640 to 10660, 10750 to 10828, 10887 to 11032, 11044 to 11065, 11276 to 11317, 11446 to 11482, 11566 to 11697, 11754 to 11779, 11818 to 11949, 12067 to 12103, 12186 to 12220, 12280 to 12323, 12364 to 12452, 12468 to 12578, 12616 to 12639, 12681 to 12700, 12785 to 12805, 12985 to 13011, and 13052 to 13086; these read TISS…TMSP, TRST…TVTD, GTLS…TPMT, SMTT…PSTL, ATTP…STPS, TTTN…TGTG, TSQT…STTE, PSMS…TSTL, SPTV…STEN, SISA…FPET, MTST…VTSM, TTST…TDSM, TTSA…TFTS, TPNA…IAKS, STSM…SGGI, SSSM…AEST, RSTP…VKGS, LSME…TATT, SHST…GPPT, SAMS…TETS, TSTL…FSSS, TTIT…STST, TMTE…STTE, SRIP…SVGI, ETPS…TPDI, TTSH…NSNS, ITTT…SHST, STTS…STPS, SITT…STTA, ITTI…TTAE, TETT…SIAT, TSNS…HSTP, TTET…SSIT, NSTS…PSFT, SHST…SHST, TETT…STSS, YSPS…STPS, TSSF…TATG, HSLP…KTIS, YTSS…ITTT, ITNT…PSFT, TTKT…ATSK, TTSY…HSPP, STPS…SSPS, HSTA…SSIT, TSSI…PPIF, TTET…SFTS, TEST…HTPP, TETP…HSTP, TKTT…TSTS, TTGT…TKTT, ITTT…RTSH, TTES…ETRS, TTET…HSPP, TETA…TTGI, SHST…ISHS, FTSS…TSHS, SYTS…HRTP, TETI…TTST, TGTS…TTSH, TEIT…ATSK, SHST…PPIF, TTES…HSPP, AETT…TTGI, FTSS…TSTE, TSSI…HRTP, SHST…NPSL, TTET…PPSF, TTSH…SSFT, TSSI…HSTP, TTTE…RSHS, TTSH…SKTI, SDST…SPSF, ITTT…TVPS, ITTE…SPLS, TSSI…LSSA, TTKT…TSTK, SHSS…TSTS, TTSF…TPSF, TTTE…QRSP, TTET…SPSS, SHST…HSTP, TGTE…SPSH, STTA…ITTT, TTET…PGFS, TKTT…HSTP, SIAT…HSPP, TSSF…STPV, PSYT…HSTP, TETT…STPI, TTET…TTET, EMTS…NTPS, FTTA…DIPT, SSPS…TSPT, IPST…LQTS, TSSM…TVPT, and SLPT…TPTT. Composition is skewed to low complexity over residues 513 to 538 and 547 to 559; these read SMTT…LSST and TSHT…PSTL. Positions 1620–1638 are enriched in low complexity; that stretch reads TSTPPITSSVTPTNTVTSM. Polar residues predominate over residues 1944 to 1956; it reads TTSATMEPPSSSV. A compositionally biased stretch (low complexity) spans 1957 to 1968; it reads AATDTGQTTFTS. Positions 2066-2091 are enriched in polar residues; that stretch reads NASSMTTSETTYPNSPTGPVTNSMSK. Over residues 2096-2107 the composition is skewed to low complexity; that stretch reads ASMTQTSSTATS. The segment covering 2113 to 2123 has biased composition (polar residues); that stretch reads PSGSTTEIAKS. The span at 2170 to 2185 shows a compositional bias: low complexity; it reads STSMTPSTVSTSIPTS. Residues 2186–2195 show a composition bias toward polar residues; the sequence is QPKTVNSSSG. Composition is skewed to low complexity over residues 2292 to 2308 and 2442 to 2458; these read SSPP…AEST and RSTP…PTST. The span at 2591 to 2603 shows a compositional bias: low complexity; that stretch reads SAMSTSDIPSSPS. 2 stretches are compositionally biased toward low complexity: residues 2929–2944 and 3074–3097; these read STDI…TPSS and ETPS…TATS. Residues 3098 to 3109 are compositionally biased toward polar residues; that stretch reads PETNTLTPTPDI. Low complexity predominate over residues 3309–3359; that stretch reads TTSHSTPSFTSPIATTKTSSHSSPSFTSSIATLETTSHSTPSFTSSITTNS. Over residues 3360 to 3370 the composition is skewed to polar residues; sequence HSTPRFSSSIA. Residues 3371-3385 show a composition bias toward low complexity; sequence TRETTSHSTSSFTPS. The span at 3386 to 3395 shows a compositional bias: polar residues; that stretch reads IATTKTNSNS. Residues 3420 to 3452 are compositionally biased toward low complexity; the sequence is ITTTETTSHSTPSFTSSMATTKTTSHSTPSFTS. The segment covering 3453–3462 has biased composition (polar residues); that stretch reads PIATRETTSH. The segment covering 3463–3481 has biased composition (low complexity); the sequence is STPSFTSLITTTKTTSHST. Residues 3740–3749 show a composition bias toward polar residues; it reads ITTIETPSHG. The segment covering 3750-3785 has biased composition (low complexity); that stretch reads TPSFTSSITSTETTSHSSPSFISSITTTEITSHSTP. Residues 3786–3812 are compositionally biased toward polar residues; the sequence is RFTSSITTMETPSHSTPNFTSSITTAE. Low complexity-rich tracts occupy residues 4020 to 4042 and 4067 to 4096; these read STPS…PSFT and TSNS…SSMT. Positions 4097–4106 are enriched in polar residues; the sequence is ATETTSHSTP. 2 stretches are compositionally biased toward low complexity: residues 4182-4228 and 4237-4249; these read TTET…PSFT and TSHS…SSIT. The segment covering 4557–4574 has biased composition (low complexity); that stretch reads TETTSNSSPSFTSSITNT. Residues 4575–4601 are compositionally biased toward polar residues; sequence KTTSYSPPGFTSSIPATETTSRSPPGF. A compositionally biased stretch (low complexity) spans 4602-4617; it reads TSSITTTETTSHSTSS. The segment covering 4802–4827 has biased composition (low complexity); the sequence is TSSFTSSITSTETTSHSTPSLTSSIT. Positions 5137 to 5158 are enriched in low complexity; sequence TPSHITPSFTSTITTSESTSHS. Polar residues predominate over residues 5159–5170; that stretch reads NPSLTSAITTTE. 2 stretches are compositionally biased toward low complexity: residues 5174–5203 and 5458–5486; these read HSPP…ITTT and TEST…PSFT. Over residues 5834 to 5858 the composition is skewed to low complexity; it reads TTSYSTPSITSSITTTERTSHSTPS. Polar residues predominate over residues 5859 to 5874; it reads YTSSIATRETPSHTVP. Residues 5875 to 5889 show a composition bias toward low complexity; it reads SFTSSITTTESTSHS. Positions 5890–5901 are enriched in polar residues; sequence NPSLTSAITTTE. The span at 6045-6059 shows a compositional bias: low complexity; sequence SFTSSITTTDSTSHS. Positions 6060–6071 are enriched in polar residues; sequence NPSLTSAITTTE. Over residues 6172–6185 the composition is skewed to low complexity; that stretch reads TESTSHSTPSFTSS. Positions 6186–6197 are enriched in polar residues; the sequence is IATTETTSHTPP. Residues 6456–6475 show a composition bias toward low complexity; it reads TETPSHSTPSFPSSITTTQS. Positions 6852 to 6867 are enriched in polar residues; that stretch reads HNTLGLSSSVDTTKTT. The segment covering 6946-6965 has biased composition (low complexity); sequence ITTTETTSHSTPSITSSVTT. Polar residues predominate over residues 6999–7018; the sequence is TTESTSHSNPSLTSAITTTE. A compositionally biased stretch (low complexity) spans 7172-7206; sequence TASHSNPSSTSSITTTESTSHSPPRSTSAIATTGI. 2 stretches are compositionally biased toward low complexity: residues 7300–7329 and 7400–7427; these read TSSI…TSHS and SYTS…STET. Polar residues predominate over residues 7476 to 7491; sequence TETISHSPPSFTSLTN. Residues 7492-7532 show a composition bias toward low complexity; that stretch reads STETTSHSPPSFTSSSTTTETPSHSTPGFSSSIATSKTTST. Low complexity-rich tracts occupy residues 7734 to 7766 and 7922 to 7944; these read TSHS…ATSK and SHST…STPS. Positions 7945–7987 are enriched in polar residues; that stretch reads YTSSIATSETPSHTVPSFTSLITTTDSTSHSNPSLTSAITTTE. Over residues 8088-8101 the composition is skewed to low complexity; the sequence is TESTSHSTPSFTSS. Over residues 8102 to 8113 the composition is skewed to polar residues; that stretch reads IATTETTSHTPP. A compositionally biased stretch (low complexity) spans 8372–8391; it reads TETPSHSTPSFPSSITTTQS. Polar residues predominate over residues 8768-8783; the sequence is HNTLGLSSSVDTTKTT. Residues 8862 to 8881 are compositionally biased toward low complexity; it reads ITTTETTSHSTPSITSSVTT. The segment covering 8915–8934 has biased composition (polar residues); sequence TTESTSHSNPSLTSAITTTE. Composition is skewed to low complexity over residues 9067-9081 and 9088-9122; these read PTTE…SFTS and TASH…TTGI. Positions 9335-9360 are enriched in low complexity; the sequence is TSSITTTETPSHSSPSFPSSITSTET. A compositionally biased stretch (polar residues) spans 9409-9424; sequence TETISHSPPSFTSLTN. 3 stretches are compositionally biased toward low complexity: residues 9425-9465, 9566-9585, and 9612-9624; these read STET…TTST, SHST…TSHS, and TTET…PSFT. Residues 9625 to 9661 show a composition bias toward polar residues; it reads SSIATAETTSHSPPSFTSLITTSETPSHSNPSFTSLI. Residues 9662 to 9674 are compositionally biased toward low complexity; sequence TTTESTSHSPPSF. Composition is skewed to polar residues over residues 9892-9903 and 9921-9933; these read NPSLTSAITNTE and TTSH…TSLI. The segment covering 9934–9973 has biased composition (low complexity); sequence TSTETTSHSPPSFTSSSTTTETPSHSTPGFSSSIATSKTI. A compositionally biased stretch (low complexity) spans 10120–10130; sequence ITTTETTSHST. A compositionally biased stretch (polar residues) spans 10131-10166; it reads PNITSSVTTTERTSHSTPSYTSSIATGETPSHTVPS. 2 stretches are compositionally biased toward low complexity: residues 10196 to 10271 and 10394 to 10421; these read HSPP…SFTS and TSET…STPS. Residues 10750-10791 show a composition bias toward polar residues; sequence TTTETTSHSPPRFTSSITTTKTPSDSTPVFTPSIATSETSSH. Composition is skewed to low complexity over residues 10792–10828, 10887–10937, and 10950–11032; these read STPG…QRSP, TTET…SSIT, and PSSI…SPSS. The span at 11278–11291 shows a compositional bias: low complexity; sequence TETTSHSPPHFTSS. A compositionally biased stretch (polar residues) spans 11292 to 11317; that stretch reads ITRTKTTSHRPPTFTSSITTTESPSH. The segment covering 11566-11682 has biased composition (low complexity); the sequence is TTETTSHSIP…SHSTSGFTSS (117 aa). 2 stretches are compositionally biased toward polar residues: residues 11683–11697 and 11754–11769; these read NATT…PGFS and TKTT…SSIA. Composition is skewed to low complexity over residues 11770–11779 and 11818–11880; these read STKTTSHSTP and SIAT…SHST. Composition is skewed to polar residues over residues 11881–11896 and 11903–11912; these read PSFT…TSHS and LIPTTKTTLH. Composition is skewed to low complexity over residues 11913–11949 and 12067–12091; these read SPPS…HSPP and TSSF…TSSI. Polar residues predominate over residues 12092 to 12103; sequence AVTETPSDSTPV. Positions 12280 to 12309 are enriched in low complexity; that stretch reads TETTSHSAPNFSSSITSTETTSHSTPSFTS. The span at 12310-12323 shows a compositional bias: polar residues; that stretch reads AITSTETTSHSTPI. The span at 12364–12412 shows a compositional bias: low complexity; it reads TTETTSHSTPGFASSITTTKTTSHSTPSFTSSIATSNTTSSSTPGFTSS. The span at 12413-12439 shows a compositional bias: polar residues; sequence IATTETTSRSTPGFTSSIVTTETTSPH. Low complexity predominate over residues 12440–12452; it reads TPGFTSSITTTET. A compositionally biased stretch (polar residues) spans 12468 to 12477; the sequence is EMTSHSTPSL. Composition is skewed to low complexity over residues 12478–12569, 12624–12639, 12681–12692, 12794–12805, 12990–13003, and 13073–13086; these read TFSI…VTTP, TSTP…DIPT, SSPSIQSTETSS, QTTPSIPSLQTS, PESE…ASSS, and TSET…TPTT. In terms of domain architecture, EGF-like spans 13130–13163; sequence SGDRCQLQTRCQNGGQWDGLKCQCPSTFYGSSCE. Disulfide bonds link Cys-13134-Cys-13140 and Cys-13153-Cys-13162. Positions 13172-13297 constitute an SEA domain; it reads DVVETEVGME…DSIKVNNNSK (126 aa). The chain crosses the membrane as a helical span at residues 13381-13401; sequence LVGGLTAGAALLVLLLLALGV.

Post-translationally, highly O-glycosylated and probably also N-glycosylated. In terms of tissue distribution, fetal and adult small intestine and fetal and adult colon.

It is found in the membrane. Functionally, major glycoprotein component of a variety of mucus gels. Thought to provide a protective, lubricating barrier against particles and infectious agents at mucosal surfaces. The protein is Mucin-3B of Homo sapiens (Human).